We begin with the raw amino-acid sequence, 67 residues long: Gene 51 protein (67 aa).

The chain is Gene 51 protein (51) from Mycobacterium (Mycobacteriophage L5).